The chain runs to 193 residues: Transforming protein RhoA (193 aa).

GTP contacts are provided by residues 12 to 19, 30 to 37, 59 to 63, and 117 to 120; these read GDGACGKT, FPEVYVPT, DTAGQ, and NKKD. The Effector region signature appears at 34-42; that stretch reads YVPTVFENY. A switch II region; involved in RAP1GDS1 isoform 3 binding region spans residues 61–78; it reads AGQEDYDRLRPLSYPDTD. The residue at position 63 (Gln-63) is a 5-glutamyl serotonin. Residue Lys-135 forms a Glycyl lysine isopeptide (Lys-Gly) (interchain with G-Cter in ubiquitin) linkage. 160–162 is a GTP binding site; that stretch reads SAK. The residue at position 188 (Ser-188) is a Phosphoserine; by PKG/PRKG1. Cys-190 bears the Cysteine methyl ester mark. The S-geranylgeranyl cysteine moiety is linked to residue Cys-190. Positions 191-193 are cleaved as a propeptide — removed in mature form; sequence LIL.

The protein belongs to the small GTPase superfamily. Rho family. Interacts with ARHGEF28. Interacts (via GTP-bound form) with RIPOR1 (via N-terminus); this interaction links RHOA to STK24 and STK26 kinases. Interacts with RIPOR2 (via active GTP- or inactive GDP-bound forms) isoform 1 and isoform 2; these interactions are direct, block the loading of GTP to RHOA and decrease upon chemokine CCL19 stimulation in primary T lymphocytes. Binds PRKCL1, ROCK1 and ROCK2. Interacts with ARHGEF2, ARHGEF3, NET1 and RTKN. Interacts with PLCE1 and AKAP13. Interacts with DIAPH1. Interacts (in the constitutively activated, GTP-bound form) with DGKQ. Interacts with RACK1; enhances RHOA activation. Interacts with PKP4; the interaction is detected at the midbody. Interacts (GTP-bound form preferentially) with PKN2; the interaction stimulates autophosphorylation and phosphorylation of PKN2. Interacts with ARHGDIA; this interaction inactivates and stabilizes RHOA. Interacts with ARHGDIB. Interacts (GTP-bound form) with KCNA2 (via cytoplasmic N-terminal domain). Interacts (GTP-bound form) with ECT2; the interaction results in allosteric activation of ECT2. Interacts with RAP1GDS1; the interaction is direct and in a 1:1 stoichiometry. Post-translationally, ubiquitinated by the BCR(KCTD13) and BCR(TNFAIP1) E3 ubiquitin ligase complexes, leading to its degradation by the proteasome, thereby regulating the actin cytoskeleton and synaptic transmission in neurons. Ubiquitinated at Lys-135 in a FBXL19-mediated manner; leading to proteasomal degradation. Phosphorylation by PRKG1 at Ser-188 inactivates RHOA signaling. Phosphorylation by SLK at Ser-188 in response to AGTR2 activation. In terms of processing, serotonylation of Gln-63 by TGM2 during activation and aggregation of platelets leads to constitutive activation of GTPase activity.

The protein resides in the cell membrane. The protein localises to the cytoplasm. It is found in the cytoskeleton. Its subcellular location is the cleavage furrow. It localises to the cell cortex. The protein resides in the midbody. The protein localises to the cell projection. It is found in the lamellipodium. Its subcellular location is the dendrite. It localises to the nucleus. It carries out the reaction GTP + H2O = GDP + phosphate + H(+). Regulated by guanine nucleotide exchange factors (GEFs) which promote the exchange of bound GDP for free GTP, GTPase activating proteins (GAPs) which increase the GTP hydrolysis activity and GDP dissociation inhibitors which inhibit the dissociation of the nucleotide from the GTPase. Activated by GEFs such as ARHGEF2, ARHGEF3, ARHGEF28 and BCR. Inhibited by GAPs such as ARHGAP30. Inhibited by GDP dissociation inhibitors such as ARHGDIA. Functionally, small GTPase which cycles between an active GTP-bound and an inactive GDP-bound state. Mainly associated with cytoskeleton organization, in active state binds to a variety of effector proteins to regulate cellular responses such as cytoskeletal dynamics, cell migration and cell cycle. Regulates a signal transduction pathway linking plasma membrane receptors to the assembly of focal adhesions and actin stress fibers. Involved in a microtubule-dependent signal that is required for the myosin contractile ring formation during cell cycle cytokinesis. Plays an essential role in cleavage furrow formation. Required for the apical junction formation of keratinocyte cell-cell adhesion. Essential for the SPATA13-mediated regulation of cell migration and adhesion assembly and disassembly. The MEMO1-RHOA-DIAPH1 signaling pathway plays an important role in ERBB2-dependent stabilization of microtubules at the cell cortex. It controls the localization of APC and CLASP2 to the cell membrane, via the regulation of GSK3B activity. In turn, membrane-bound APC allows the localization of the MACF1 to the cell membrane, which is required for microtubule capture and stabilization. Regulates KCNA2 potassium channel activity by reducing its location at the cell surface in response to CHRM1 activation; promotes KCNA2 endocytosis. Acts as an allosteric activator of guanine nucleotide exchange factor ECT2 by binding in its activated GTP-bound form to the PH domain of ECT2 which stimulates the release of PH inhibition and promotes the binding of substrate RHOA to the ECT2 catalytic center. May be an activator of PLCE1. In neurons, involved in the inhibition of the initial spine growth. Upon activation by CaMKII, modulates dendritic spine structural plasticity by relaying CaMKII transient activation to synapse-specific, long-term signaling. Acts as a regulator of platelet alpha-granule release during activation and aggregation of platelets. When activated by DAAM1 may signal centrosome maturation and chromosomal segregation during cell division. May also be involved in contractile ring formation during cytokinesis. This Mus musculus (Mouse) protein is Transforming protein RhoA (Rhoa).